Consider the following 138-residue polypeptide: Acidic phospholipase A2 pgPLA 1b/pgPLA 2b (138 aa).

A signal peptide spans 1–16 (MRTLWIMAVLLVGVKG). 7 disulfide bridges follow: C42–C131, C44–C60, C59–C111, C65–C138, C66–C104, C73–C97, and C91–C102. Ca(2+)-binding residues include Y43, G45, and G47. H63 is a catalytic residue. Position 64 (D64) interacts with Ca(2+). Residue D105 is part of the active site.

The protein belongs to the phospholipase A2 family. Group II subfamily. D49 sub-subfamily. Ca(2+) is required as a cofactor. As to expression, expressed by the venom gland.

Its subcellular location is the secreted. It catalyses the reaction a 1,2-diacyl-sn-glycero-3-phosphocholine + H2O = a 1-acyl-sn-glycero-3-phosphocholine + a fatty acid + H(+). Functionally, PLA2 catalyzes the calcium-dependent hydrolysis of the 2-acyl groups in 3-sn-phosphoglycerides. This is Acidic phospholipase A2 pgPLA 1b/pgPLA 2b from Protobothrops flavoviridis (Habu).